The primary structure comprises 126 residues: Small ribosomal subunit protein uS13 (126 aa).

The tract at residues 92–126 (HRRGLPVRGQRTKTNARTRKGPKKTVAGKKKATRK) is disordered.

This sequence belongs to the universal ribosomal protein uS13 family. As to quaternary structure, part of the 30S ribosomal subunit. Forms a loose heterodimer with protein S19. Forms two bridges to the 50S subunit in the 70S ribosome.

In terms of biological role, located at the top of the head of the 30S subunit, it contacts several helices of the 16S rRNA. In the 70S ribosome it contacts the 23S rRNA (bridge B1a) and protein L5 of the 50S subunit (bridge B1b), connecting the 2 subunits; these bridges are implicated in subunit movement. Contacts the tRNAs in the A and P-sites. The chain is Small ribosomal subunit protein uS13 from Deinococcus deserti (strain DSM 17065 / CIP 109153 / LMG 22923 / VCD115).